A 594-amino-acid chain; its full sequence is ATP-dependent zinc metalloprotease FtsH 1 (594 aa).

The Cytoplasmic segment spans residues M1–R2. Residues W3–M23 traverse the membrane as a helical segment. The Extracellular portion of the chain corresponds to E24–P92. A helical transmembrane segment spans residues I93 to W113. Over F114–Q594 the chain is Cytoplasmic. Residue G186 to T193 coordinates ATP. Residue H408 participates in Zn(2+) binding. E409 is an active-site residue. Zn(2+) is bound by residues H412 and D485.

In the central section; belongs to the AAA ATPase family. The protein in the C-terminal section; belongs to the peptidase M41 family. In terms of assembly, homohexamer. It depends on Zn(2+) as a cofactor.

Its subcellular location is the cell membrane. Acts as a processive, ATP-dependent zinc metallopeptidase for both cytoplasmic and membrane proteins. Plays a role in the quality control of integral membrane proteins. The chain is ATP-dependent zinc metalloprotease FtsH 1 from Symbiobacterium thermophilum (strain DSM 24528 / JCM 14929 / IAM 14863 / T).